The chain runs to 138 residues: Basic phospholipase A2 DAV-N6 (138 aa).

A signal peptide spans 1–16; that stretch reads MRTLWIVAVLLVSVEG. 7 disulfide bridges follow: Cys42-Cys131, Cys44-Cys60, Cys59-Cys111, Cys65-Cys138, Cys66-Cys104, Cys73-Cys97, and Cys91-Cys102. Residues Tyr43, Gly45, and Gly47 each coordinate Ca(2+). The active site involves His63. Position 64 (Asp64) interacts with Ca(2+). Residue Asp105 is part of the active site.

The cofactor is Ca(2+). In terms of tissue distribution, expressed by the venom gland.

The protein resides in the secreted. The catalysed reaction is a 1,2-diacyl-sn-glycero-3-phosphocholine + H2O = a 1-acyl-sn-glycero-3-phosphocholine + a fatty acid + H(+). In terms of biological role, snake venom phospholipase A2 (PLA2) that inhibits neuromuscular transmission by blocking acetylcholine release from the nerve termini. PLA2 catalyzes the calcium-dependent hydrolysis of the 2-acyl groups in 3-sn-phosphoglycerides. The protein is Basic phospholipase A2 DAV-N6 of Deinagkistrodon acutus (Hundred-pace snake).